The sequence spans 282 residues: NADPH-dependent 7-cyano-7-deazaguanine reductase (282 aa).

Position 88-90 (88-90 (IES)) interacts with substrate. Position 90–91 (90–91 (SK)) interacts with NADPH. The active-site Thioimide intermediate is cysteine 190. Aspartate 197 serves as the catalytic Proton donor. 229-230 (HE) is a binding site for substrate. An NADPH-binding site is contributed by 258–259 (RG).

This sequence belongs to the GTP cyclohydrolase I family. QueF type 2 subfamily. In terms of assembly, homodimer.

Its subcellular location is the cytoplasm. The catalysed reaction is 7-aminomethyl-7-carbaguanine + 2 NADP(+) = 7-cyano-7-deazaguanine + 2 NADPH + 3 H(+). Its pathway is tRNA modification; tRNA-queuosine biosynthesis. Functionally, catalyzes the NADPH-dependent reduction of 7-cyano-7-deazaguanine (preQ0) to 7-aminomethyl-7-deazaguanine (preQ1). The protein is NADPH-dependent 7-cyano-7-deazaguanine reductase of Escherichia coli (strain K12 / MC4100 / BW2952).